A 1334-amino-acid polypeptide reads, in one-letter code: WASH complex subunit 2 (1334 aa).

Residues 1–219 are sufficient for interaction with WASHC3, WASHC4 and WASHC5; required for interaction with WASHC1; sequence MNRTSPDSER…VGSDRGSIVD (219 aa). 5 positions are modified to phosphoserine: Ser157, Ser159, Ser204, Ser205, and Ser209. Over residues 201–213 the composition is skewed to low complexity; sequence GELSSEEGSVGSD. Residues 201–471 are disordered; sequence GELSSEEGSV…SKPSKTDKVK (271 aa). Acidic residues-rich tracts occupy residues 219 to 232 and 249 to 274; these read DSED…SDED and SDEE…EDIE. At Ser284 the chain carries Phosphoserine. Basic and acidic residues predominate over residues 289–324; the sequence is LAARIKGDISNQRKEGQTDGKPQKTVKEKKERRTPA. Thr322 bears the Phosphothreonine mark. A sufficient for interaction with CCDC93 region spans residues 347-594; sequence SRGGLFSNGQ…QTSSLQPQSQ (248 aa). The interval 348–1334 is interaction with VPS35; it reads RGGLFSNGQG…DDPLNAFGSQ (987 aa). An LFa 1 motif is present at residues 358–368; that stretch reads LFDDEDESDLF. The residue at position 388 (Ser388) is a Phosphoserine. 2 short sequence motifs (LFa) span residues 441 to 457 and 476 to 485; these read LFDD…NNFF and IFDDDEGDLF. Residues 442 to 454 show a composition bias toward acidic residues; sequence FDDDDNDNDEDDN. A disordered region spans residues 492-650; sequence LPAASVSQTH…DSGATQGQEA (159 aa). Residues 513–530 show a composition bias toward polar residues; it reads LPSSKNLKLVSETKTQKG. 2 short sequence motifs (LFa) span residues 531–542 and 566–577; these read LFSDEEDSEDLF and LFGDEDEEDSLF. Phosphoserine is present on residues Ser533 and Ser538. Over residues 541 to 561 the composition is skewed to low complexity; it reads LFSSQSSSKPKSASLPSSQPP. Polar residues-rich tracts occupy residues 584-594 and 601-611; these read KQTSSLQPQSQ and EQPSKKTSALL. Phosphoserine is present on residues Ser613 and Ser614. Residues 625-639 show a composition bias toward basic and acidic residues; sequence SHTKLASDNKSKGEL. Short sequence motifs (LFa) lie at residues 658 to 670 and 686 to 698; these read LFED…VDLF and LFED…SSLF. The segment at 691-837 is disordered; sequence AESGSSLFGL…SRPKSTGVFQ (147 aa). Ser723, Ser747, Ser752, Ser783, and Ser798 each carry phosphoserine. Positions 800–811 are enriched in acidic residues; sequence FDEDEDKVEDES. Over residues 818-830 the composition is skewed to basic and acidic residues; the sequence is DGREKGLKTDSRP. Short sequence motifs (LFa) lie at residues 835-843 and 852-858; these read VFQDEELLF and DPDVDLF. 2 disordered regions span residues 862–948 and 1014–1225; these read KKIR…PSSR and AQAD…SKTH. Phosphoserine is present on residues Ser870 and Ser873. The LFa 10 signature appears at 874–884; that stretch reads LFGDDEDDDLF. Over residues 894–906 the composition is skewed to basic and acidic residues; that stretch reads PEKKGTLKKDHPV. Residues 908–919 show a composition bias toward polar residues; it reads LKNQDPLDSTQG. The tract at residues 932–1334 is interaction with phospholipids; sequence QDSSGLTPFK…DDPLNAFGSQ (403 aa). The span at 1023 to 1041 shows a compositional bias: basic residues; that stretch reads NKSRVKVRGKRRPQTRAAR. Positions 1024–1042 are required for interaction with F-actin-capping protein subunit alpha (CAPZA1 or CAPZA2 or CAPZA3); the sequence is KSRVKVRGKRRPQTRAARR. Ser1049, Ser1067, Ser1084, and Ser1109 each carry phosphoserine. 3 consecutive short sequence motifs (LFa) follow at residues 1124-1131, 1164-1178, and 1194-1202; these read LFDSGDIF, AFPD…EDLF, and LLEDEEDLF. A phosphoserine mark is found at Ser1169, Ser1172, and Ser1173. Residues 1203-1225 are compositionally biased toward basic and acidic residues; it reads ADPRGKKNERKPDSHQDSVSKTH. 3 consecutive short sequence motifs (LFa) follow at residues 1227–1233, 1255–1263, and 1283–1292; these read IFEDDIF, LFDDNIDIF, and MFDDDTDDIF. The segment at 1294 to 1334 is disordered; that stretch reads SGLQAKASKPKSQSAEAASEQRSEHKVASIFDDPLNAFGSQ. Residues 1297 to 1311 show a composition bias toward low complexity; the sequence is QAKASKPKSQSAEAA. The LFa 17 signature appears at 1323-1331; sequence IFDDPLNAF. The residue at position 1333 (Ser1333) is a Phosphoserine.

It belongs to the FAM21 family. As to quaternary structure, component of the WASH core complex also described as WASH regulatory complex (SHRC) composed of WASHC1, WASHC2, WASHC3, WASHC4 and WASHC5; in the complex interacts (via N-terminus) directly with WASHC1. The WASH core complex associates with the F-actin-capping protein dimer (formed by CAPZA1, CAPZA2 or CAPZA3 and CAPZB) in a transient or substoichiometric manner which was initially described as WASH complex. Interacts with VPS35; mediates the association with the retromer CSC complex. Interacts with FKBP15. Interacts with CCDC93, CCDC22, VPS35L; indicative for an association of the WASH core complex with the CCC and retriever complexes. Directly interacts with TBC1D23.

Its subcellular location is the early endosome membrane. It localises to the cell membrane. In terms of biological role, acts as a component of the WASH core complex that functions as a nucleation-promoting factor (NPF) at the surface of endosomes, where it recruits and activates the Arp2/3 complex to induce actin polymerization, playing a key role in the fission of tubules that serve as transport intermediates during endosome sorting. Mediates the recruitment of the WASH core complex to endosome membranes via binding to phospholipids and VPS35 of the retromer CSC. Mediates the recruitment of the F-actin-capping protein dimer to the WASH core complex probably promoting localized F-actin polymerization needed for vesicle scission. Via its C-terminus binds various phospholipids, most strongly phosphatidylinositol 4-phosphate (PtdIns-(4)P), phosphatidylinositol 5-phosphate (PtdIns-(5)P) and phosphatidylinositol 3,5-bisphosphate (PtdIns-(3,5)P2). Involved in the endosome-to-plasma membrane trafficking and recycling of SNX27-retromer-dependent cargo proteins, such as GLUT1. Required for the association of DNAJC13, ENTR1, ANKRD50 with retromer CSC subunit VPS35. Required for the endosomal recruitment of CCC and retriever complexes subunits COMMD1 and CCDC93 as well as the retrievere complex subunit VPS35L. This chain is WASH complex subunit 2, found in Mus musculus (Mouse).